Here is a 138-residue protein sequence, read N- to C-terminus: Putative pre-16S rRNA nuclease (138 aa).

This sequence belongs to the YqgF nuclease family.

Its subcellular location is the cytoplasm. Could be a nuclease involved in processing of the 5'-end of pre-16S rRNA. This Porphyromonas gingivalis (strain ATCC BAA-308 / W83) protein is Putative pre-16S rRNA nuclease.